The chain runs to 125 residues: uncharacterized protein (125 aa).

2 helical membrane passes run 28–48 and 54–74; these read VFIT…SQFC and FFLP…LFFF.

It localises to the membrane. This is an uncharacterized protein from Saccharomyces cerevisiae (strain ATCC 204508 / S288c) (Baker's yeast).